The following is a 731-amino-acid chain: Fatty acid oxidation complex subunit alpha (731 aa).

The enoyl-CoA hydratase stretch occupies residues 15-204 (TEKTSAFSLT…RQGLVDEAVP (190 aa)). The 3-hydroxyacyl-CoA dehydrogenase stretch occupies residues 320-729 (KPIHRVGILG…FYPPADKDNS (410 aa)).

In the N-terminal section; belongs to the enoyl-CoA hydratase/isomerase family. It in the central section; belongs to the 3-hydroxyacyl-CoA dehydrogenase family. Heterotetramer of two alpha chains (FadJ) and two beta chains (FadI).

The protein resides in the cytoplasm. The enzyme catalyses a (3S)-3-hydroxyacyl-CoA = a (2E)-enoyl-CoA + H2O. It carries out the reaction a 4-saturated-(3S)-3-hydroxyacyl-CoA = a (3E)-enoyl-CoA + H2O. It catalyses the reaction a (3S)-3-hydroxyacyl-CoA + NAD(+) = a 3-oxoacyl-CoA + NADH + H(+). The catalysed reaction is (3S)-3-hydroxybutanoyl-CoA = (3R)-3-hydroxybutanoyl-CoA. The protein operates within lipid metabolism; fatty acid beta-oxidation. Its function is as follows. Catalyzes the formation of a hydroxyacyl-CoA by addition of water on enoyl-CoA. Also exhibits 3-hydroxyacyl-CoA epimerase and 3-hydroxyacyl-CoA dehydrogenase activities. This Pectobacterium atrosepticum (strain SCRI 1043 / ATCC BAA-672) (Erwinia carotovora subsp. atroseptica) protein is Fatty acid oxidation complex subunit alpha.